Reading from the N-terminus, the 236-residue chain is Mediator of RNA polymerase II transcription subunit 20 (236 aa).

It belongs to the Mediator complex subunit 20 family. As to quaternary structure, component of the Mediator complex.

The protein resides in the nucleus. Functionally, component of the Mediator complex, a coactivator involved in the regulated transcription of nearly all RNA polymerase II-dependent genes. Mediator functions as a bridge to convey information from gene-specific regulatory proteins to the basal RNA polymerase II transcription machinery. Mediator is recruited to promoters by direct interactions with regulatory proteins and serves as a scaffold for the assembly of a functional preinitiation complex with RNA polymerase II and the general transcription factors. The sequence is that of Mediator of RNA polymerase II transcription subunit 20 (SRB2) from Debaryomyces hansenii (strain ATCC 36239 / CBS 767 / BCRC 21394 / JCM 1990 / NBRC 0083 / IGC 2968) (Yeast).